Consider the following 243-residue polypeptide: MSAVKSALGDMVITFLWVILSATFGIQTAAIVSAVGFHGITWAPLVISTLVVFVSISIFTVIGNVLGGASFNPCGNAAFYTAGVSSDSLFSLAIRSPAQAIGAAGGAITIMEMIPEKYKTRIGGKPSLQFGAHNGAISEVVLSFSVTFLVLLIILRGPRKLLAKTFLLALATVSVFVVGSKFTRPFMNPAIAFGWAYIYKSHNTWDHFYVYWISSYTGAILSAMLFRIIFPAPPLVQKKQKKA.

2 helical membrane-spanning segments follow: residues 12-32 (VITF…AAIV) and 42-62 (WAPL…FTVI). The short motif at 72 to 74 (NPC) is the NPA 1 element. The next 3 membrane-spanning stretches (helical) occupy residues 90-110 (FSLA…AITI), 135-155 (GAIS…LIIL), and 162-182 (LAKT…GSKF). An NPA 2 motif is present at residues 188–190 (NPA). A helical membrane pass occupies residues 210 to 230 (VYWISSYTGAILSAMLFRIIF).

It belongs to the MIP/aquaporin (TC 1.A.8) family. SIP (TC 1.A.8.10) subfamily. As to expression, expressed in roots and above ground. Expressed in elongating regions of the root tips, cotyledons, minor veins and hydathode cells of the rosette leaves. Weakly expressed in vascular tissues of the flower petals, filaments of stamens, upper part of the styles and receptacles of the siliques.

Its subcellular location is the endoplasmic reticulum membrane. Functionally, water channel required to facilitate the transport of water across cell membrane. The protein is Probable aquaporin SIP1-2 (SIP1-2) of Arabidopsis thaliana (Mouse-ear cress).